The following is a 185-amino-acid chain: Ribosome-recycling factor (185 aa).

This sequence belongs to the RRF family.

The protein resides in the cytoplasm. Functionally, responsible for the release of ribosomes from messenger RNA at the termination of protein biosynthesis. May increase the efficiency of translation by recycling ribosomes from one round of translation to another. The chain is Ribosome-recycling factor from Roseiflexus sp. (strain RS-1).